The sequence spans 179 residues: MTYLSQLEALLFVAGEEGLSLRQLASLLELTPTALQQQLDKLSQKYKEDKESGLCLIESSRTYKLVTKECLAPLLKDYAKAPINQTLSRASLEVLSIVAYKQPITRIEIDEIRGVNSSGALSKLVAFGLVQEAGKKEVIGRPNLYATTDYFLDYMGINHLEELVDISSIAVEEQETTLF.

This sequence belongs to the ScpB family. Homodimer. Homodimerization may be required to stabilize the binding of ScpA to the Smc head domains. Component of a cohesin-like complex composed of ScpA, ScpB and the Smc homodimer, in which ScpA and ScpB bind to the head domain of Smc. The presence of the three proteins is required for the association of the complex with DNA.

It is found in the cytoplasm. In terms of biological role, participates in chromosomal partition during cell division. May act via the formation of a condensin-like complex containing Smc and ScpA that pull DNA away from mid-cell into both cell halves. The polypeptide is Segregation and condensation protein B (Streptococcus equi subsp. equi (strain 4047)).